Here is a 783-residue protein sequence, read N- to C-terminus: Protein SCARECROW (783 aa).

The tract at residues 298–387 is disordered; the sequence is QPQSQDAITH…QSPPASENTA (90 aa). Composition is skewed to low complexity over residues 342–353 and 372–384; these read PSSLPFVPVPSS and ESQSQSQSPPASE. A coiled-coil region spans residues 387–418; the sequence is AAAALIRTESIMRREKEELEQQKKDEEGLHLL. One can recognise a GRAS domain in the interval 408 to 777; that stretch reads QKKDEEGLHL…LCLLTASAWR (370 aa). A leucine repeat I (LRI) region spans residues 415–478; that stretch reads LHLLTLLLQC…LVNSCLGIYA (64 aa). Residues 422–426 carry the LxCxE motif motif; that stretch reads LQCAE. Positions 497–562 are VHIID; that stretch reads FQVFNGISPF…GGPPLVRLTG (66 aa). The VHIID motif lies at 528–532; it reads VHIID. The tract at residues 572–604 is leucine repeat II (LRII); it reads ATGKRLSDFAQKLGLPFEFFPVADKVGNLDPQR. Residues 613-700 are PFYRE; that stretch reads VAVHWLQHSL…QQLLSREIRN (88 aa). An SAW region spans residues 703 to 777; sequence AVGGPSRSGE…LCLLTASAWR (75 aa).

Belongs to the GRAS family.

It localises to the nucleus. In terms of biological role, putative transcription factor involved in asymmetric cell division. Required for differentiation of endodermis and graviresponses. The sequence is that of Protein SCARECROW (SCR) from Ipomoea nil (Japanese morning glory).